The sequence spans 316 residues: Ribosomal RNA small subunit methyltransferase H (316 aa).

Residues 35-37 (AGH), Asp55, Phe84, Asp105, and Gln112 contribute to the S-adenosyl-L-methionine site.

It belongs to the methyltransferase superfamily. RsmH family.

Its subcellular location is the cytoplasm. The enzyme catalyses cytidine(1402) in 16S rRNA + S-adenosyl-L-methionine = N(4)-methylcytidine(1402) in 16S rRNA + S-adenosyl-L-homocysteine + H(+). Functionally, specifically methylates the N4 position of cytidine in position 1402 (C1402) of 16S rRNA. This chain is Ribosomal RNA small subunit methyltransferase H, found in Streptococcus thermophilus (strain ATCC BAA-250 / LMG 18311).